The sequence spans 1175 residues: Double-stranded RNA-specific adenosine deaminase (1175 aa).

Residues R30 and R42 each carry the asymmetric dimethylarginine modification. The 67-residue stretch at 135–201 (LSISQNPEQK…GKPPLWSLVP (67 aa)) folds into the Z-binding 1 domain. An interaction with Z-DNA region spans residues 135–204 (LSISQNPEQK…PLWSLVPLSQ (70 aa)). Positions 207 to 239 (TQPPRAVNSDKEVPRGEPDLDSEDGDPASDLEG) are disordered. Positions 214–224 (NSDKEVPRGEP) are enriched in basic and acidic residues. Acidic residues predominate over residues 225–235 (DLDSEDGDPAS). Residues S228 and S235 each carry the phosphoserine modification. The Z-binding 2 domain occupies 243–307 (LLDMAEIKEK…ATPPIWYLTD (65 aa)). The disordered stretch occupies residues 315–384 (MKRSTHSGPA…ARPGPVRLRP (70 aa)). The span at 357–376 (KRVENGQEPVTKYESRHEAR) shows a compositional bias: basic and acidic residues. K368 participates in a covalent cross-link: Glycyl lysine isopeptide (Lys-Gly) (interchain with G-Cter in SUMO); alternate. A Glycyl lysine isopeptide (Lys-Gly) (interchain with G-Cter in SUMO1); alternate cross-link involves residue K368. A Glycyl lysine isopeptide (Lys-Gly) (interchain with G-Cter in SUMO2); alternate cross-link involves residue K368. S431 is modified (phosphoserine). The DRBM 1 domain occupies 453–521 (NPVSGLLEYA…AVKAMAILLR (69 aa)). The tract at residues 524–561 (KAKDSGQPEELSNCPMEEDPEKPAESQPPSSSATSLFS) is disordered. Residues 550 to 561 (QPPSSSATSLFS) are compositionally biased toward polar residues. Phosphoserine occurs at positions 564, 579, and 586. Residues 564 to 632 (SPVTTLLECM…AEEAMKALQE (69 aa)) enclose the DRBM 2 domain. Residues 632–652 (EEAANSADDQSGGANTDSLDE) form a disordered region. Positions 638–648 (ADDQSGGANTD) are enriched in polar residues. Positions 662-671 (IGELVRYLNT) are N-terminal extension of DRBM 3 and constituent of a bi-partite nuclear localization signal. Residues 672–740 (NPVGGLLEYA…ADAALRVLIG (69 aa)) form the DRBM 3 domain. The tract at residues 741-747 (ESEKAEQ) is C-terminal extension of DRBM 3 and constituent of a bi-partite nuclear localization signal. At T754 the chain carries Phosphothreonine. Phosphoserine is present on residues S760, S769, and S771. K821 is covalently cross-linked (Glycyl lysine isopeptide (Lys-Gly) (interchain with G-Cter in SUMO2)). The region spanning 832–1167 (SLGTGNRCVK…ISKPQEEKNF (336 aa)) is the A to I editase domain. H856 serves as a coordination point for Zn(2+). E858 acts as the Proton donor in catalysis. Zn(2+) is bound by residues C912 and C982.

Homodimer. Homodimerization is essential for its catalytic activity. Isoform 5 can form heterodimers with ADARB1/ADAR2. Isoform 1 interacts with ILF2/NF45 and ILF3/NF90. Binding to ILF3/NF90 up-regulates ILF3-mediated gene expression. Isoform 1 and isoform 5 (via DRBM 3 domain) interact with TNPO1. Isoform 5 (via DRBM domains) interacts with XPO5. Isoform 1 and isoform 5 can interact with EIF2AK2/PKR and UPF1. Sumoylation reduces RNA-editing activity. Detected in brain.

The protein localises to the cytoplasm. It is found in the nucleus. The enzyme catalyses adenosine in double-stranded RNA + H2O + H(+) = inosine in double-stranded RNA + NH4(+). Its function is as follows. Catalyzes the hydrolytic deamination of adenosine to inosine in double-stranded RNA (dsRNA) referred to as A-to-I RNA editing. This may affect gene expression and function in a number of ways that include mRNA translation by changing codons and hence the amino acid sequence of proteins; pre-mRNA splicing by altering splice site recognition sequences; RNA stability by changing sequences involved in nuclease recognition; genetic stability in the case of RNA virus genomes by changing sequences during viral RNA replication; and RNA structure-dependent activities such as microRNA production or targeting or protein-RNA interactions. Can edit both viral and cellular RNAs and can edit RNAs at multiple sites (hyper-editing) or at specific sites (site-specific editing). Its cellular RNA substrates include: bladder cancer-associated protein (BLCAP), neurotransmitter receptors for glutamate (GRIA2) and serotonin (HTR2C) and GABA receptor (GABRA3). Site-specific RNA editing of transcripts encoding these proteins results in amino acid substitutions which consequently alters their functional activities. Exhibits low-level editing at the GRIA2 Q/R site, but edits efficiently at the R/G site and HOTSPOT1. Does not affect polyomavirus replication but provides protection against virus-induced cytopathic effects. Essential for embryonic development and cell survival and plays a critical role in the maintenance of hematopoietic stem cells. This is Double-stranded RNA-specific adenosine deaminase (Adar) from Rattus norvegicus (Rat).